The following is a 207-amino-acid chain: Riboflavin synthase (207 aa).

Lumazine-binding repeat units follow at residues 1-94 (MFTG…LGGH) and 95-191 (IVQG…INYL). Residues 4–6 (GLV), 45–47 (CLT), 59–64 (DVSPET), 98–100 (GHV), Lys133, 142–144 (SLT), and 156–161 (NIIPHT) contribute to the 2,4-dihydroxypteridine site.

Homotrimer.

It catalyses the reaction 2 6,7-dimethyl-8-(1-D-ribityl)lumazine + H(+) = 5-amino-6-(D-ribitylamino)uracil + riboflavin. It participates in cofactor biosynthesis; riboflavin biosynthesis; riboflavin from 2-hydroxy-3-oxobutyl phosphate and 5-amino-6-(D-ribitylamino)uracil: step 2/2. In terms of biological role, catalyzes the dismutation of two molecules of 6,7-dimethyl-8-ribityllumazine, resulting in the formation of riboflavin and 5-amino-6-(D-ribitylamino)uracil. In Aquifex aeolicus (strain VF5), this protein is Riboflavin synthase (ribE).